Consider the following 123-residue polypeptide: WAP four-disulfide core domain protein 5 (123 aa).

The signal sequence occupies residues 1–24 (MRFGRLLLLAVLLAGVSQLPAVSG). WAP domains follow at residues 27 to 74 (KGEK…IPRV) and 75 to 121 (SVKL…RDPV). Cystine bridges form between Cys34-Cys62, Cys41-Cys66, Cys49-Cys61, Cys55-Cys70, Cys81-Cys109, Cys88-Cys113, Cys96-Cys108, and Cys102-Cys117.

The protein resides in the secreted. Functionally, putative acid-stable proteinase inhibitor. This is WAP four-disulfide core domain protein 5 (WFDC5) from Otolemur garnettii (Small-eared galago).